A 474-amino-acid polypeptide reads, in one-letter code: uncharacterized protein (474 aa).

The helical transmembrane segment at 3 to 23 threads the bilayer; that stretch reads LTLWLVLGAVGVGAVGTGVGF. The tract at residues 171 to 296 is disordered; the sequence is VSDGSSSKTR…KETKDRTKVD (126 aa). The span at 180–210 shows a compositional bias: basic residues; sequence RTPKKTKTSKKKPIKKKSSKSKSSKGSKKQK. A compositionally biased stretch (polar residues) spans 231–253; it reads TRSQSKQQKGQEQATDQTDSEGV. Residues 257–266 show a composition bias toward acidic residues; that stretch reads EGADNTDTEL. Positions 267-281 are enriched in low complexity; sequence VETTAETTEQEATTK. Residues 282-296 show a composition bias toward basic and acidic residues; the sequence is STKDTKETKDRTKVD.

It localises to the membrane. This is an uncharacterized protein from Mycoplasma pneumoniae (strain ATCC 29342 / M129 / Subtype 1) (Mycoplasmoides pneumoniae).